A 642-amino-acid chain; its full sequence is Myrosinase-binding protein 2 (642 aa).

Jacalin-type lectin domains follow at residues 2-151 (SEKV…HFFA), 156-291 (LKHF…HFAP), 334-477 (PNKV…YFAP), and 490-633 (SKKL…HAVP). The segment covering 296-334 (TPAPAPAPAPAPAPAPSPAPASAPVPAPAPTPAPAPAPP) has biased composition (pro residues). Disordered regions lie at residues 296–338 (TPAP…NKVE) and 479–499 (TNST…RGGN). The span at 479–490 (TNSTTPSTPSTS) shows a compositional bias: low complexity.

It belongs to the jacalin lectin family. Expressed in flowers. Detected mainly in ovules and styles of immature flowers, but also in pistils, styles, stamens, petals and embryos. Not detected in leaves.

This is Myrosinase-binding protein 2 (F-ATMBP) from Arabidopsis thaliana (Mouse-ear cress).